The primary structure comprises 824 residues: AMP deaminase 2 (824 aa).

The disordered stretch occupies residues 1 to 43 (MASYPGPGKSKAKYPFKKRAGLQASAAAPEARSGLGASPLQSA). Residues 10-20 (SKAKYPFKKRA) are compositionally biased toward basic residues. Position 44 is an omega-N-methylarginine (arginine 44). Serine 45, serine 63, and serine 79 each carry phosphoserine. Tyrosine 90 is modified (phosphotyrosine). 2 positions are modified to phosphoserine: serine 96 and serine 113. Position 133 is a phosphothreonine (threonine 133). Residues serine 135 and serine 137 each carry the phosphoserine modification. Residues histidine 364 and histidine 366 each coordinate Zn(2+). Substrate contacts are provided by residues histidine 366 and 435–440 (KFNAKY). Position 633 (histidine 633) interacts with Zn(2+). Substrate is bound at residue glutamate 636. Histidine 655 (proton acceptor) is an active-site residue. Aspartate 710 lines the Zn(2+) pocket. 711 to 714 (DPLQ) serves as a coordination point for substrate.

The protein belongs to the metallo-dependent hydrolases superfamily. Adenosine and AMP deaminases family. As to quaternary structure, homotetramer. Zn(2+) serves as cofactor.

The enzyme catalyses AMP + H2O + H(+) = IMP + NH4(+). It participates in purine metabolism; IMP biosynthesis via salvage pathway; IMP from AMP: step 1/1. Functionally, AMP deaminase plays a critical role in energy metabolism. Catalyzes the deamination of AMP to IMP and plays an important role in the purine nucleotide cycle. The protein is AMP deaminase 2 of Mus musculus (Mouse).